The sequence spans 90 residues: uncharacterized protein (90 aa).

Residues 15 to 34 traverse the membrane as a helical segment; that stretch reads HVLAISTFIATAAVASYFTT. The segment at 34–65 is disordered; the sequence is TKPKTKNEGKNSSALSQQKSGESSNSDAMGKD. The segment covering 43-60 has biased composition (polar residues); that stretch reads KNSSALSQQKSGESSNSD. Asn44 carries N-linked (GlcNAc...) asparagine glycosylation.

It localises to the mitochondrion membrane. This is an uncharacterized protein from Saccharomyces cerevisiae (strain ATCC 204508 / S288c) (Baker's yeast).